A 158-amino-acid chain; its full sequence is Regulator of sigma D (158 aa).

Belongs to the Rsd/AlgQ family. Interacts with RpoD.

Its subcellular location is the cytoplasm. Binds RpoD and negatively regulates RpoD-mediated transcription activation by preventing the interaction between the primary sigma factor RpoD with the catalytic core of the RNA polymerase and with promoter DNA. May be involved in replacement of the RNA polymerase sigma subunit from RpoD to RpoS during the transition from exponential growth to the stationary phase. In Escherichia coli O127:H6 (strain E2348/69 / EPEC), this protein is Regulator of sigma D.